The sequence spans 498 residues: Lysine--tRNA ligase (498 aa).

2 residues coordinate Mg(2+): Glu408 and Glu415.

It belongs to the class-II aminoacyl-tRNA synthetase family. In terms of assembly, homodimer. Requires Mg(2+) as cofactor.

The protein resides in the cytoplasm. The catalysed reaction is tRNA(Lys) + L-lysine + ATP = L-lysyl-tRNA(Lys) + AMP + diphosphate. The polypeptide is Lysine--tRNA ligase (Pediococcus pentosaceus (strain ATCC 25745 / CCUG 21536 / LMG 10740 / 183-1w)).